The sequence spans 184 residues: Ribosome-recycling factor (184 aa).

The protein belongs to the RRF family.

The protein localises to the cytoplasm. Functionally, responsible for the release of ribosomes from messenger RNA at the termination of protein biosynthesis. May increase the efficiency of translation by recycling ribosomes from one round of translation to another. In Stenotrophomonas maltophilia (strain R551-3), this protein is Ribosome-recycling factor.